The sequence spans 1232 residues: Protein transport protein sec-16A.1 (1232 aa).

6 disordered regions span residues 18–134 (GASG…SGYA), 172–193 (RNGFVYDSGESDKTSEELEEDE), 815–843 (PVQESQQHVPQPQPVENKSISSEAKKWHD), 866–942 (KPIA…VVPE), 972–1069 (QPIP…PQKQ), and 1140–1232 (PHLM…QNND). Residues 26-37 (DWNNPYNASPPS) are compositionally biased toward polar residues. Residues 67–76 (RPILIQPARP) show a composition bias toward low complexity. A compositionally biased stretch (polar residues) spans 78 to 100 (SQKSNRQGTGMSNGSRGLNSTFN). The segment covering 817–836 (QESQQHVPQPQPVENKSISS) has biased composition (polar residues). Residues 896-914 (SSVTVAASASRTSTLTSST) show a composition bias toward low complexity. Polar residues-rich tracts occupy residues 1046-1060 (QQATLGQASIPNAKT), 1149-1159 (SNKSSTNSLRS), and 1168-1178 (YLQSGMATSQA). Residues 1194-1203 (PMSFSFMPAP) are compositionally biased toward low complexity. The span at 1222-1232 (PSESLSKQNND) shows a compositional bias: polar residues.

Belongs to the SEC16 family. As to quaternary structure, interacts with tfg-1 (via N-terminus); the interaction is direct and is required for both the localization of tfg-1 and to maintain the distribution of sec-16A.1 at endoplasmic reticulum exit sites (ERES).

The protein resides in the endoplasmic reticulum. It is found in the endoplasmic reticulum-Golgi intermediate compartment. Functionally, plays a role in the organization of the endoplasmic reticulum exit sites (ERES), also known as transitional endoplasmic reticulum (tER). In association with tfg-1, accumulates at ERES to positively regulate secretory cargo trafficking from the endoplasmic reticulum to the endoplasmic reticulum-Golgi intermediate compartment (ERGIC) and Golgi apparatus. The polypeptide is Protein transport protein sec-16A.1 (Caenorhabditis elegans).